The following is a 284-amino-acid chain: 2,3,4,5-tetrahydropyridine-2,6-dicarboxylate N-succinyltransferase (284 aa).

The protein belongs to the transferase hexapeptide repeat family.

It localises to the cytoplasm. It catalyses the reaction (S)-2,3,4,5-tetrahydrodipicolinate + succinyl-CoA + H2O = (S)-2-succinylamino-6-oxoheptanedioate + CoA. It participates in amino-acid biosynthesis; L-lysine biosynthesis via DAP pathway; LL-2,6-diaminopimelate from (S)-tetrahydrodipicolinate (succinylase route): step 1/3. The protein is 2,3,4,5-tetrahydropyridine-2,6-dicarboxylate N-succinyltransferase of Brucella abortus (strain S19).